Here is a 167-residue protein sequence, read N- to C-terminus: Dual specificity protein phosphatase 1B (167 aa).

Residues 24-165 form the Tyrosine-protein phosphatase domain; that stretch reads DLSEIQQGLF…LQQFEKSIQG (142 aa). The active-site Phosphocysteine intermediate is cysteine 109.

This sequence belongs to the protein-tyrosine phosphatase family. Non-receptor class dual specificity subfamily. As to quaternary structure, associates with MPK3 and MPK6. Interacts with MPK6 is promoted during HR-like responses triggered by fungal elicitors, whereas interaction with MPK3 in repressed. Expressed in flowers, seedlings, roots, leaves, and seeds. Present in stomata and meristematic cells.

It localises to the nucleus. The protein resides in the cytoplasm. The catalysed reaction is O-phospho-L-tyrosyl-[protein] + H2O = L-tyrosyl-[protein] + phosphate. The enzyme catalyses O-phospho-L-seryl-[protein] + H2O = L-seryl-[protein] + phosphate. It carries out the reaction O-phospho-L-threonyl-[protein] + H2O = L-threonyl-[protein] + phosphate. Its function is as follows. Has a dual specificity toward Ser/Thr and Tyr-containing proteins. Prevents biotic and abiotic stress responses, including ozone, oxidative stress and pathogen attacks; represses MAPK activities during hypersensitive response to limit the spread of the HR response after infection by necrotrophic pathogen such as Botrytis cinerea. May be also involved in ABA and salt responses. Dephosphorylates MPK3 and MPK6. This Arabidopsis thaliana (Mouse-ear cress) protein is Dual specificity protein phosphatase 1B (DSPTP1B).